The chain runs to 165 residues: MASYFDEHDCEPLNPEREARNNMLLELARRVRGAWSWAPGSRSLFNRMDFEDLGLVDWEHHLPPPAAKAVVESLPRTVIRSSKAELKCPVCLLEFEEEETVIEMPCHHLFHSNCILPWLSKTNSCPLCRHELPTDDDSYEEHKKDKARRQQQQHRLENLHGAMYT.

Residues 88 to 129 (CPVCLLEFEEEETVIEMPCHHLFHSNCILPWLSKTNSCPLCR) form an RING-type; atypical zinc finger. A disordered region spans residues 136–165 (DDSYEEHKKDKARRQQQQHRLENLHGAMYT). Phosphothreonine is present on T165.

It belongs to the RNF181 family. As to quaternary structure, directly interacts with ITGA2B and, as a result, with integrin ITGA2B/ITGB3. There is no evidence that integrin ITGA2B/ITGB3 is an endogenous substrate for RNF181-directed ubiquitination. Auto-ubiquitinated as part of the enzymatic reaction.

It catalyses the reaction S-ubiquitinyl-[E2 ubiquitin-conjugating enzyme]-L-cysteine + [acceptor protein]-L-lysine = [E2 ubiquitin-conjugating enzyme]-L-cysteine + N(6)-ubiquitinyl-[acceptor protein]-L-lysine.. It functions in the pathway protein modification; protein ubiquitination. Its function is as follows. E3 ubiquitin-protein ligase which accepts ubiquitin from an E2 ubiquitin-conjugating enzyme in the form of a thioester and then directly transfers the ubiquitin to targeted substrates. Catalyzes monoubiquitination of 26S proteasome subunit PSMC2/RPT1. The sequence is that of E3 ubiquitin-protein ligase RNF181 (Rnf181) from Rattus norvegicus (Rat).